The primary structure comprises 119 residues: Single-stranded DNA-binding protein (119 aa).

Residues 3–102 (INIVTLVGRV…IRVDQLELLG (100 aa)) form the SSB domain.

In terms of assembly, homotetramer.

The polypeptide is Single-stranded DNA-binding protein (ssb1) (Anabaena variabilis).